The sequence spans 367 residues: Histidinol-phosphate aminotransferase (367 aa).

The residue at position 221 (Lys221) is an N6-(pyridoxal phosphate)lysine.

The protein belongs to the class-II pyridoxal-phosphate-dependent aminotransferase family. Histidinol-phosphate aminotransferase subfamily. Homodimer. Pyridoxal 5'-phosphate serves as cofactor.

It carries out the reaction L-histidinol phosphate + 2-oxoglutarate = 3-(imidazol-4-yl)-2-oxopropyl phosphate + L-glutamate. Its pathway is amino-acid biosynthesis; L-histidine biosynthesis; L-histidine from 5-phospho-alpha-D-ribose 1-diphosphate: step 7/9. The chain is Histidinol-phosphate aminotransferase from Erythrobacter litoralis (strain HTCC2594).